The following is a 144-amino-acid chain: UPF0306 protein Spro_0510 (144 aa).

The protein belongs to the UPF0306 family.

In Serratia proteamaculans (strain 568), this protein is UPF0306 protein Spro_0510.